The chain runs to 20 residues: Agglutinin beta-3 chain (20 aa).

Residues 1 to 20 form a disordered region; sequence GPNGKSQSIIVGPWGDRVTN.

This sequence belongs to the jacalin lectin family. Formed of four alpha chains and four beta chains.

D-galactose-specific lectin, binds the T-antigen structure Gal-beta1,3-GalNAc. This chain is Agglutinin beta-3 chain, found in Maclura pomifera (Osage orange).